Reading from the N-terminus, the 511-residue chain is Ectonucleoside triphosphate diphosphohydrolase 1 (511 aa).

The Cytoplasmic portion of the chain corresponds to 1-16 (MEDIKDSKVKRFCSKN). The chain crosses the membrane as a helical span at residues 17–37 (ILIILGFSSVLAVIALIAVGL). Residues 38–478 (THNKPLPENV…LSPPLPHSTY (441 aa)) are Extracellular-facing. The segment at 46 to 171 (NVKYGIVLDA…DFQGAKIITG (126 aa)) is N-terminal lobe. Residue asparagine 73 is glycosylated (N-linked (GlcNAc...) asparagine). The cysteines at positions 84 and 108 are disulfide-linked. The active-site Proton acceptor is glutamate 174. The tract at residues 205 to 441 (QATFGALDLG…GTSWDQIHFM (237 aa)) is C-terminal lobe. Residues asparagine 226, asparagine 291, and asparagine 333 are each glycosylated (N-linked (GlcNAc...) asparagine). Disulfide bonds link cysteine 254/cysteine 300 and cysteine 281/cysteine 324. Cysteines 337 and 342 form a disulfide. Residue asparagine 374 is glycosylated (N-linked (GlcNAc...) asparagine). Cysteine 391 and cysteine 414 are oxidised to a cystine. N-linked (GlcNAc...) asparagine glycosylation is found at asparagine 429 and asparagine 458. Residues 479–499 (ISLMVLFSLVLVAMVITGLFI) form a helical membrane-spanning segment. Residues 500-511 (FSKPSYFWKEAV) lie on the Cytoplasmic side of the membrane.

The protein belongs to the GDA1/CD39 NTPase family. In terms of assembly, homodimer; disulfide-linked. It depends on Ca(2+) as a cofactor. Mg(2+) serves as cofactor. Post-translationally, N-glycosylated. The N-terminus is blocked. In terms of processing, palmitoylated on Cys-13; which is required for caveola targeting. As to expression, expressed in primary neurons and astrocytes, kidney, liver, muscle, thymus, lung and spleen.

The protein localises to the membrane. It localises to the caveola. It carries out the reaction a ribonucleoside 5'-triphosphate + 2 H2O = a ribonucleoside 5'-phosphate + 2 phosphate + 2 H(+). The catalysed reaction is a ribonucleoside 5'-triphosphate + H2O = a ribonucleoside 5'-diphosphate + phosphate + H(+). The enzyme catalyses a ribonucleoside 5'-diphosphate + H2O = a ribonucleoside 5'-phosphate + phosphate + H(+). It catalyses the reaction ATP + 2 H2O = AMP + 2 phosphate + 2 H(+). It carries out the reaction ATP + H2O = ADP + phosphate + H(+). The catalysed reaction is ADP + H2O = AMP + phosphate + H(+). The enzyme catalyses CTP + 2 H2O = CMP + 2 phosphate + 2 H(+). It catalyses the reaction CTP + H2O = CDP + phosphate + H(+). It carries out the reaction CDP + H2O = CMP + phosphate + H(+). The catalysed reaction is GTP + 2 H2O = GMP + 2 phosphate + 2 H(+). The enzyme catalyses GTP + H2O = GDP + phosphate + H(+). It catalyses the reaction GDP + H2O = GMP + phosphate + H(+). It carries out the reaction ITP + 2 H2O = IMP + 2 phosphate + 2 H(+). The catalysed reaction is ITP + H2O = IDP + phosphate + H(+). The enzyme catalyses IDP + H2O = IMP + phosphate + H(+). It catalyses the reaction UTP + 2 H2O = UMP + 2 phosphate + 2 H(+). It carries out the reaction UTP + H2O = UDP + phosphate + H(+). The catalysed reaction is UDP + H2O = UMP + phosphate + H(+). Catalyzes the hydrolysis of both di- and triphosphate nucleotides (NDPs and NTPs) and hydrolyze NTPs to nucleotide monophosphates (NMPs) in two distinct successive phosphate-releasing steps, with NDPs as intermediates and participates in the regulation of extracellular levels of nucleotides. By hydrolyzing proinflammatory ATP and platelet-activating ADP to AMP, it blocks platelet aggregation and supports blood flow. This chain is Ectonucleoside triphosphate diphosphohydrolase 1, found in Rattus norvegicus (Rat).